The sequence spans 228 residues: L-ribulose-5-phosphate 4-epimerase UlaF (228 aa).

Residues 26–27 (GN), 43–44 (SG), and 72–73 (SS) contribute to the substrate site. Residues Asp-74, His-93, and His-95 each contribute to the Zn(2+) site. The active-site Proton donor/acceptor is Asp-118. His-167 contributes to the Zn(2+) binding site. The Proton donor/acceptor role is filled by Tyr-225.

Belongs to the aldolase class II family. AraD/FucA subfamily. Requires Zn(2+) as cofactor.

It catalyses the reaction L-ribulose 5-phosphate = D-xylulose 5-phosphate. The protein operates within cofactor degradation; L-ascorbate degradation; D-xylulose 5-phosphate from L-ascorbate: step 4/4. In terms of biological role, catalyzes the isomerization of L-ribulose 5-phosphate to D-xylulose 5-phosphate. Is involved in the anaerobic L-ascorbate utilization. The chain is L-ribulose-5-phosphate 4-epimerase UlaF from Escherichia coli O139:H28 (strain E24377A / ETEC).